The primary structure comprises 51 residues: FVNQHLCGSHLVEALYLVCGERGFFYTPKAGIVEQCCASTCSLYQLENYCN.

Intrachain disulfides connect Cys-7-Cys-37, Cys-19-Cys-50, and Cys-36-Cys-41.

The protein belongs to the insulin family. Heterodimer of a B chain and an A chain linked by two disulfide bonds.

Its subcellular location is the secreted. Its function is as follows. Insulin decreases blood glucose concentration. It increases cell permeability to monosaccharides, amino acids and fatty acids. It accelerates glycolysis, the pentose phosphate cycle, and glycogen synthesis in liver. The protein is Insulin (INS) of Balaenoptera borealis (Sei whale).